We begin with the raw amino-acid sequence, 308 residues long: Aspartate carbamoyltransferase catalytic subunit (308 aa).

2 residues coordinate carbamoyl phosphate: Arg57 and Thr58. Lys86 provides a ligand contact to L-aspartate. The carbamoyl phosphate site is built by Arg107, His135, and Gln138. Arg168 and Arg229 together coordinate L-aspartate. Residues Leu268 and Pro269 each coordinate carbamoyl phosphate.

Belongs to the aspartate/ornithine carbamoyltransferase superfamily. ATCase family. As to quaternary structure, heterooligomer of catalytic and regulatory chains.

The catalysed reaction is carbamoyl phosphate + L-aspartate = N-carbamoyl-L-aspartate + phosphate + H(+). The protein operates within pyrimidine metabolism; UMP biosynthesis via de novo pathway; (S)-dihydroorotate from bicarbonate: step 2/3. Functionally, catalyzes the condensation of carbamoyl phosphate and aspartate to form carbamoyl aspartate and inorganic phosphate, the committed step in the de novo pyrimidine nucleotide biosynthesis pathway. This is Aspartate carbamoyltransferase catalytic subunit from Pyrococcus furiosus (strain ATCC 43587 / DSM 3638 / JCM 8422 / Vc1).